The primary structure comprises 229 residues: Flagellar L-ring protein (229 aa).

Residues 1–23 form the signal peptide; it reads MNPLTRVALAVAAFAALVLALSA. Cys-24 is lipidated: N-palmitoyl cysteine. Cys-24 carries S-diacylglycerol cysteine lipidation.

It belongs to the FlgH family. As to quaternary structure, the basal body constitutes a major portion of the flagellar organelle and consists of four rings (L,P,S, and M) mounted on a central rod.

It localises to the cell outer membrane. The protein localises to the bacterial flagellum basal body. Its function is as follows. Assembles around the rod to form the L-ring and probably protects the motor/basal body from shearing forces during rotation. This chain is Flagellar L-ring protein, found in Anaeromyxobacter dehalogenans (strain 2CP-1 / ATCC BAA-258).